The primary structure comprises 445 residues: Phosphoglucosamine mutase (445 aa).

Ser-99 acts as the Phosphoserine intermediate in catalysis. Positions 99, 242, 244, and 246 each coordinate Mg(2+). Ser-99 carries the phosphoserine modification.

This sequence belongs to the phosphohexose mutase family. It depends on Mg(2+) as a cofactor. Activated by phosphorylation.

It carries out the reaction alpha-D-glucosamine 1-phosphate = D-glucosamine 6-phosphate. Functionally, catalyzes the conversion of glucosamine-6-phosphate to glucosamine-1-phosphate. The polypeptide is Phosphoglucosamine mutase (Campylobacter jejuni (strain RM1221)).